Reading from the N-terminus, the 497-residue chain is L-amino-acid oxidase BjussuLAAO-I (497 aa).

The signal sequence occupies residues 1–13 (MNVFFMFSKPGKL). Cys-23 and Cys-186 are disulfide-bonded. FAD is bound by residues 56 to 57 (MS), 76 to 77 (EA), 76 to 80 (EASER), Gln-84, and 100 to 103 (GPMR). Arg-103 is a substrate binding site. N-linked (GlcNAc...) asparagine glycosylation occurs at Asn-185. Residue His-236 coordinates substrate. Val-274 is a binding site for FAD. Cysteines 344 and 425 form a disulfide. Tyr-385 lines the substrate pocket. FAD-binding positions include Glu-470, 477–482 (GWIAST), and 478–482 (WIAST). A substrate-binding site is contributed by 477-478 (GW).

The protein belongs to the flavin monoamine oxidase family. FIG1 subfamily. As to quaternary structure, homodimer; non-covalently linked. Requires FAD as cofactor. Expressed by the venom gland.

Its subcellular location is the secreted. The enzyme catalyses an L-alpha-amino acid + O2 + H2O = a 2-oxocarboxylate + H2O2 + NH4(+). The catalysed reaction is L-leucine + O2 + H2O = 4-methyl-2-oxopentanoate + H2O2 + NH4(+). It carries out the reaction L-phenylalanine + O2 + H2O = 3-phenylpyruvate + H2O2 + NH4(+). It catalyses the reaction L-tryptophan + O2 + H2O = indole-3-pyruvate + H2O2 + NH4(+). The enzyme catalyses L-methionine + O2 + H2O = 4-methylsulfanyl-2-oxobutanoate + H2O2 + NH4(+). The catalysed reaction is L-isoleucine + O2 + H2O = (S)-3-methyl-2-oxopentanoate + H2O2 + NH4(+). It carries out the reaction L-tyrosine + O2 + H2O = 3-(4-hydroxyphenyl)pyruvate + H2O2 + NH4(+). It catalyses the reaction L-cysteine + O2 + H2O = 2-oxo-3-sulfanylpropanoate + H2O2 + NH4(+). Functionally, catalyzes an oxidative deamination of predominantly hydrophobic and aromatic L-amino acids, thus producing hydrogen peroxide that may contribute to the diverse toxic effects of this enzyme. Shows high specificity for L-Met, L-Leu, L-Phe, L-Tyr, L-Ile, L-Trp, a moderate activity on L-Cys and low activity on L-Val, L-Lys, L-Arg, L-His, L-Gln, L-Thr and L-Ser. Exhibits diverse biological activities, such as hemorrhage, hemolysis, edema, apoptosis of vascular endothelial cells or tumor cell lines, and antibacterial, as well as regulation of platelet aggregation. Effects of snake L-amino oxidases on platelets are controversial, since they either induce aggregation or inhibit agonist-induced aggregation. These different effects are probably due to different experimental conditions. In vitro, shows parasiticidal activities against both trypanosomes and leishmania, as a result of enzyme-catalyzed hydrogen peroxide production. This Bothrops jararacussu (Jararacussu) protein is L-amino-acid oxidase BjussuLAAO-I.